The chain runs to 143 residues: Large ribosomal subunit protein uL11 (143 aa).

Belongs to the universal ribosomal protein uL11 family. As to quaternary structure, part of the ribosomal stalk of the 50S ribosomal subunit. Interacts with L10 and the large rRNA to form the base of the stalk. L10 forms an elongated spine to which L12 dimers bind in a sequential fashion forming a multimeric L10(L12)X complex. In terms of processing, one or more lysine residues are methylated.

In terms of biological role, forms part of the ribosomal stalk which helps the ribosome interact with GTP-bound translation factors. In Rhizorhabdus wittichii (strain DSM 6014 / CCUG 31198 / JCM 15750 / NBRC 105917 / EY 4224 / RW1) (Sphingomonas wittichii), this protein is Large ribosomal subunit protein uL11.